Here is a 231-residue protein sequence, read N- to C-terminus: AAFATEDDKIVGGYECKAYSQPHQVSLNSGYHFCGGSLVNENWVVSAAHCYQSRVEVRLGEHNIQVTEGSEQFISSSRVIRHPNYSSYNIDNDIMLIKLSKPATLNTYVQPVALPTSCAPAGTMCTVSGWGNTMSSTADKNKLQCLNIPILSYSDCNNSYPGMITNAMFCAGYLEGGKDSCQGDSGGPVVCNGELQGVVSWGYGCAEPGNPGVYAKVCIFNDWLTSTMATY.

Positions 1–4 (AAFA) are cleaved as a signal peptide. A propeptide spans 5 to 9 (TEDDK) (activation peptide). In terms of domain architecture, Peptidase S1 spans 10–229 (IVGGYECKAY…FNDWLTSTMA (220 aa)). 6 disulfides stabilise this stretch: Cys16-Cys145, Cys34-Cys50, Cys118-Cys218, Cys125-Cys191, Cys156-Cys170, and Cys181-Cys205. His49 (charge relay system) is an active-site residue. Ca(2+) is bound by residues Glu61, Asn63, Val66, and Glu71. Asp93 serves as the catalytic Charge relay system. Ser185 (charge relay system) is an active-site residue.

Belongs to the peptidase S1 family. Requires Ca(2+) as cofactor.

The protein localises to the secreted. It is found in the extracellular space. The enzyme catalyses Preferential cleavage: Arg-|-Xaa, Lys-|-Xaa.. This chain is Trypsin-2, found in Salmo salar (Atlantic salmon).